Consider the following 47-residue polypeptide: AVEKTNSSSSLGEVVDRILDKGVVVDLWVRVSLVGIELLALEARVVI.

The protein belongs to the gas vesicle GvpA family. The gas vesicle shell is 2 nm thick and consists of a single layer of this protein. It forms helical ribs nearly perpendicular to the long axis of the vesicle.

The protein resides in the gas vesicle shell. In terms of biological role, gas vesicles are hollow, gas filled proteinaceous nanostructures found in some microorganisms. During planktonic growth they allow positioning of the organism at a favorable depth for light or nutrient acquisition. GvpA forms the protein shell. This Dactylococcopsis salina (Myxobaktron salinum) protein is Gas vesicle protein A.